The sequence spans 121 residues: Small ribosomal subunit protein uS13 (121 aa).

Residues 91–121 (HRRGLPVRGQNTKNNARTRKGPRKTVANKKK) form a disordered region. A compositionally biased stretch (basic residues) spans 106-121 (ARTRKGPRKTVANKKK).

Belongs to the universal ribosomal protein uS13 family. Part of the 30S ribosomal subunit. Forms a loose heterodimer with protein S19. Forms two bridges to the 50S subunit in the 70S ribosome.

Located at the top of the head of the 30S subunit, it contacts several helices of the 16S rRNA. In the 70S ribosome it contacts the 23S rRNA (bridge B1a) and protein L5 of the 50S subunit (bridge B1b), connecting the 2 subunits; these bridges are implicated in subunit movement. Contacts the tRNAs in the A and P-sites. The sequence is that of Small ribosomal subunit protein uS13 from Lysinibacillus sphaericus (strain C3-41).